The primary structure comprises 198 residues: MFKVIQRSVGPASLSLLTFRVYAAPKKDSPHKSYMKIDELSLYSVPEGQSKYVEEPRTQLEENISQLRHHCEPYTSFCQEIYSHTKPKVDHFVQWGVDNYNYLQNAPPGFFPRLGVIGFAGFVGLLFARGSKIKKLVYPPFFMGLGASVYYPQQAITIAQITGEKLYDWGLRGYIVIEDLWKQNFQKPGNVKNSPGNK.

Residues Met-1–Ala-23 form the signal peptide. An N-linked (GlcNAc...) asparagine glycan is attached at Asn-63. The chain crosses the membrane as a helical span at residues Pro-108 to Ala-128.

It belongs to the apolipoprotein O/MICOS complex subunit Mic27 family. In terms of assembly, component of the mitochondrial contact site and cristae organizing system (MICOS) complex, composed of at least MICOS10/MIC10, CHCHD3/MIC19, CHCHD6/MIC25, APOOL/MIC27, IMMT/MIC60, APOO/MIC23/MIC26 and MICOS13/MIC13. This complex was also known under the names MINOS or MitOS complex. The MICOS complex associates with mitochondrial outer membrane proteins SAMM50, MTX1 and MTX2 (together described as components of the mitochondrial outer membrane sorting assembly machinery (SAM) complex) and DNAJC11, mitochondrial inner membrane protein TMEM11 and with HSPA9. The MICOS and SAM complexes together with DNAJC11 are part of a large protein complex spanning both membranes termed the mitochondrial intermembrane space bridging (MIB) complex. Interacts with IMMT/MIC60. Interacts with MICOS10/MIC10 and APOOL/MIC27.

It localises to the mitochondrion inner membrane. Its subcellular location is the mitochondrion. The protein localises to the endoplasmic reticulum membrane. The protein resides in the golgi apparatus membrane. In terms of biological role, component of the MICOS complex, a large protein complex of the mitochondrial inner membrane that plays crucial roles in the maintenance of crista junctions, inner membrane architecture, and formation of contact sites to the outer membrane. Plays a crucial role in crista junction formation and mitochondrial function. Can induce cardiac lipotoxicity by enhancing mitochondrial respiration and fatty acid metabolism in cardiac myoblasts. Promotes cholesterol efflux from macrophage cells. Detected in HDL, LDL and VLDL. Secreted by a microsomal triglyceride transfer protein (MTTP)-dependent mechanism, probably as a VLDL-associated protein that is subsequently transferred to HDL. The chain is MICOS complex subunit Mic26 (Apoo) from Mus musculus (Mouse).